The primary structure comprises 204 residues: MKNESTFIDVPADSSSAMKGKAPLIGVAKDHTASGSGGYNRGLSIFDFLLRLAAIVAASVAAGTMFTSDETLPFFTQFLQFQAGYDDLPTFQFFVISMSLVSGYIVLSLPISVVTIVRPLAAAPRLLLLVLDTAVMGLTMAAASSAAAISYVAHNGNQNTNWLPICQQFGDFCQKTSGGCGLFLCRRRVFHDPGCPLRSRSQRH.

Residues 1–41 are Cytoplasmic-facing; that stretch reads MKNESTFIDVPADSSSAMKGKAPLIGVAKDHTASGSGGYNR. Residues 42 to 62 traverse the membrane as a helical segment; sequence GLSIFDFLLRLAAIVAASVAA. The Extracellular portion of the chain corresponds to 63–92; sequence GTMFTSDETLPFFTQFLQFQAGYDDLPTFQ. Residues 93-113 form a helical membrane-spanning segment; that stretch reads FFVISMSLVSGYIVLSLPISV. The Cytoplasmic segment spans residues 114–125; the sequence is VTIVRPLAAAPR. Residues 126–146 traverse the membrane as a helical segment; it reads LLLLVLDTAVMGLTMAAASSA. The Extracellular segment spans residues 147-204; sequence AAISYVAHNGNQNTNWLPICQQFGDFCQKTSGGCGLFLCRRRVFHDPGCPLRSRSQRH.

The protein belongs to the Casparian strip membrane proteins (CASP) family. Homodimer and heterodimers.

It localises to the cell membrane. In terms of biological role, regulates membrane-cell wall junctions and localized cell wall deposition. Required for establishment of the Casparian strip membrane domain (CSD) and the subsequent formation of Casparian strips, a cell wall modification of the root endodermis that determines an apoplastic barrier between the intraorganismal apoplasm and the extraorganismal apoplasm and prevents lateral diffusion. The chain is Casparian strip membrane protein 3 from Raphanus sativus (Radish).